Consider the following 706-residue polypeptide: Ribosomal RNA large subunit methyltransferase K/L (706 aa).

In terms of domain architecture, THUMP spans 43–154; that stretch reads LMYQSLLWSR…RDMASVALDL (112 aa).

The protein belongs to the methyltransferase superfamily. RlmKL family.

The protein resides in the cytoplasm. It carries out the reaction guanosine(2445) in 23S rRNA + S-adenosyl-L-methionine = N(2)-methylguanosine(2445) in 23S rRNA + S-adenosyl-L-homocysteine + H(+). The enzyme catalyses guanosine(2069) in 23S rRNA + S-adenosyl-L-methionine = N(2)-methylguanosine(2069) in 23S rRNA + S-adenosyl-L-homocysteine + H(+). Its function is as follows. Specifically methylates the guanine in position 2445 (m2G2445) and the guanine in position 2069 (m7G2069) of 23S rRNA. This is Ribosomal RNA large subunit methyltransferase K/L from Yersinia pestis (strain Pestoides F).